The primary structure comprises 59 residues: Putative movement protein p6.6 (59 aa).

The chain crosses the membrane as a helical span at residues 13–35 (RVGPLLVLCLLLLLILFSRSWNV).

The protein resides in the membrane. Functionally, cell-to-cell movement. The protein is Putative movement protein p6.6 of Panicum mosaic virus (strain United States/Kansas 109S) (PMV).